The chain runs to 77 residues: Small ribosomal subunit protein uS17 (77 aa).

Belongs to the universal ribosomal protein uS17 family. Part of the 30S ribosomal subunit.

Its function is as follows. One of the primary rRNA binding proteins, it binds specifically to the 5'-end of 16S ribosomal RNA. In Rickettsia bellii (strain OSU 85-389), this protein is Small ribosomal subunit protein uS17.